A 230-amino-acid chain; its full sequence is uncharacterized protein (230 aa).

Catalysis depends on charge relay system residues serine 124 and histidine 158.

The protein belongs to the peptidase S51 family.

This is an uncharacterized protein from Bacillus subtilis (strain 168).